The following is a 242-amino-acid chain: Small ribosomal subunit protein uS3 (242 aa).

Positions 39 to 109 constitute a KH type-2 domain; sequence IRQYVEKNLA…QIRINVIEVA (71 aa). The disordered stretch occupies residues 220 to 242; the sequence is VPAQAPRRQQRRRQQFEDRSSEG. Over residues 233–242 the composition is skewed to basic and acidic residues; sequence QQFEDRSSEG.

It belongs to the universal ribosomal protein uS3 family. In terms of assembly, part of the 30S ribosomal subunit. Forms a tight complex with proteins S10 and S14.

In terms of biological role, binds the lower part of the 30S subunit head. Binds mRNA in the 70S ribosome, positioning it for translation. This chain is Small ribosomal subunit protein uS3, found in Microcystis aeruginosa (strain NIES-843 / IAM M-2473).